The sequence spans 481 residues: Leukocyte immunoglobulin-like receptor subfamily A member 6 (481 aa).

The first 23 residues, 1-23, serve as a signal peptide directing secretion; it reads MTPALTALLCLGLSLGPRTHVQA. In terms of domain architecture, Ig-like C2-type 1 spans 24-118; it reads GPLPKPTLWA…PSDPLELVVT (95 aa). The Extracellular portion of the chain corresponds to 24–447; sequence GPLPKPTLWA…SHAKDYTVEN (424 aa). Residues cysteine 49 and cysteine 98 are joined by a disulfide bond. A glycan (N-linked (GlcNAc...) asparagine) is linked at asparagine 139. Disulfide bonds link cysteine 144/cysteine 196 and cysteine 245/cysteine 296. Ig-like C2-type domains lie at 225-314 and 323-408; these read PSLL…DPLN and DRVS…HLLS. Asparagine 301 and asparagine 340 each carry an N-linked (GlcNAc...) asparagine glycan. Cysteine 345 and cysteine 396 are joined by a disulfide. The interval 418-439 is disordered; it reads VSGPSGGPSLPPTGPPSTPASH. A compositionally biased stretch (pro residues) spans 426–435; the sequence is SLPPTGPPST. Residues 448–468 form a helical membrane-spanning segment; it reads LIRMGMAGLVLVVLGILLFEA. Residues 469-481 are Cytoplasmic-facing; sequence QHSQRSPQDAARR.

Its subcellular location is the membrane. In terms of biological role, may act as receptor for class I MHC antigens. The protein is Leukocyte immunoglobulin-like receptor subfamily A member 6 (LILRA6) of Pan troglodytes (Chimpanzee).